Reading from the N-terminus, the 119-residue chain is Ribosome-binding factor A (119 aa).

The protein belongs to the RbfA family. In terms of assembly, monomer. Binds 30S ribosomal subunits, but not 50S ribosomal subunits or 70S ribosomes.

It localises to the cytoplasm. Functionally, one of several proteins that assist in the late maturation steps of the functional core of the 30S ribosomal subunit. Associates with free 30S ribosomal subunits (but not with 30S subunits that are part of 70S ribosomes or polysomes). Required for efficient processing of 16S rRNA. May interact with the 5'-terminal helix region of 16S rRNA. This chain is Ribosome-binding factor A, found in Geobacter sp. (strain M21).